The chain runs to 456 residues: Protein trichome birefringence-like 25 (456 aa).

The chain crosses the membrane as a helical; Signal-anchor for type II membrane protein span at residues 26–42; sequence QIFLKSVAFFLLIGLAY. Residues 172–174 carry the GDS motif motif; the sequence is GDS. The DCXHWCLPGXXDXWN motif signature appears at 426–440; it reads DCLHWCLPGPIDSWN.

It belongs to the PC-esterase family. TBL subfamily.

Its subcellular location is the membrane. In terms of biological role, may be involved in the O-acetylation of mannan. May act as a bridging protein that binds pectin and other cell wall polysaccharides. Probably involved in maintaining esterification of pectins. This Arabidopsis thaliana (Mouse-ear cress) protein is Protein trichome birefringence-like 25 (TBL25).